We begin with the raw amino-acid sequence, 362 residues long: tRNA-specific 2-thiouridylase MnmA (362 aa).

Residues 6–13 (AMSGGVDS) and Leu32 each bind ATP. Cys101 (nucleophile) is an active-site residue. Cys101 and Cys197 are disulfide-bonded. Residue Gly125 coordinates ATP. The interval 147 to 149 (KDQ) is interaction with tRNA. The Cysteine persulfide intermediate role is filled by Cys197.

It belongs to the MnmA/TRMU family.

The protein resides in the cytoplasm. It carries out the reaction S-sulfanyl-L-cysteinyl-[protein] + uridine(34) in tRNA + AH2 + ATP = 2-thiouridine(34) in tRNA + L-cysteinyl-[protein] + A + AMP + diphosphate + H(+). Functionally, catalyzes the 2-thiolation of uridine at the wobble position (U34) of tRNA, leading to the formation of s(2)U34. The polypeptide is tRNA-specific 2-thiouridylase MnmA (Saccharopolyspora erythraea (strain ATCC 11635 / DSM 40517 / JCM 4748 / NBRC 13426 / NCIMB 8594 / NRRL 2338)).